The chain runs to 75 residues: Translational regulator CsrA (75 aa).

Belongs to the CsrA/RsmA family. As to quaternary structure, homodimer; the beta-strands of each monomer intercalate to form a hydrophobic core, while the alpha-helices form wings that extend away from the core.

It localises to the cytoplasm. In terms of biological role, a translational regulator that binds mRNA to regulate translation initiation and/or mRNA stability. Usually binds in the 5'-UTR at or near the Shine-Dalgarno sequence preventing ribosome-binding, thus repressing translation. Its main target seems to be the major flagellin gene, while its function is anatagonized by FliW. This is Translational regulator CsrA from Thermosipho melanesiensis (strain DSM 12029 / CIP 104789 / BI429).